Consider the following 136-residue polypeptide: Large ribosomal subunit protein eL27 (136 aa).

In terms of domain architecture, KOW spans 5-40; sequence MKPGKVVMVLAGRYAGRKAVIVKNIDDGTADRPYSH.

It belongs to the eukaryotic ribosomal protein eL27 family. As to quaternary structure, component of the large ribosomal subunit.

It localises to the cytoplasm. Its subcellular location is the cytosol. The protein localises to the rough endoplasmic reticulum. Component of the large ribosomal subunit. In Danio rerio (Zebrafish), this protein is Large ribosomal subunit protein eL27 (rpl27).